The primary structure comprises 306 residues: D-aminoacyl-tRNA deacylase (306 aa).

Belongs to the DtdA deacylase family. In terms of assembly, monomer. Zn(2+) serves as cofactor.

It carries out the reaction a D-aminoacyl-tRNA + H2O = a tRNA + a D-alpha-amino acid + H(+). The catalysed reaction is glycyl-tRNA(Ala) + H2O = tRNA(Ala) + glycine + H(+). Functionally, D-aminoacyl-tRNA deacylase with broad substrate specificity. By recycling D-aminoacyl-tRNA to D-amino acids and free tRNA molecules, this enzyme counteracts the toxicity associated with the formation of D-aminoacyl-tRNA entities in vivo. This Methanosarcina barkeri (strain Fusaro / DSM 804) protein is D-aminoacyl-tRNA deacylase.